Reading from the N-terminus, the 900-residue chain is Probable dipeptidyl-aminopeptidase B (900 aa).

The interval 1-83 (MARTDQGLGA…DILSHPRDKS (83 aa)) is disordered. Over 1 to 90 (MARTDQGLGA…DKSKRSRGSR (90 aa)) the chain is Cytoplasmic. Low complexity predominate over residues 24-39 (NSFSSTDSLSTDGSLF). The span at 44-55 (NATQFQKSTQLP) shows a compositional bias: polar residues. The chain crosses the membrane as a helical; Signal-anchor for type II membrane protein span at residues 91–111 (WIWVIGLLCLGGWILAFILFW). Residues 112-900 (GRRNNNSDIS…HHVGSALAAT (789 aa)) lie on the Vacuolar side of the membrane. Residues N150, N195, N348, N410, N514, N639, and N644 are each glycosylated (N-linked (GlcNAc...) asparagine). Catalysis depends on S753, which acts as the Charge relay system. N-linked (GlcNAc...) asparagine glycosylation is present at N812. Residues D830 and H863 each act as charge relay system in the active site.

It belongs to the peptidase S9B family.

It localises to the vacuole membrane. The catalysed reaction is Release of an N-terminal dipeptide, Xaa-Yaa-|-Zaa-, from a polypeptide, preferentially when Yaa is Pro, provided Zaa is neither Pro nor hydroxyproline.. In terms of biological role, type IV dipeptidyl-peptidase which removes N-terminal dipeptides sequentially from polypeptides having unsubstituted N-termini provided that the penultimate residue is proline. The polypeptide is Probable dipeptidyl-aminopeptidase B (dapB) (Talaromyces stipitatus (strain ATCC 10500 / CBS 375.48 / QM 6759 / NRRL 1006) (Penicillium stipitatum)).